The sequence spans 540 residues: ADP,ATP carrier protein 2 (540 aa).

11 consecutive transmembrane segments (helical) span residues 24–44 (FSKFVPLFLLAFFVGFNYCLL), 62–82 (VIPFLKVWGIVPGAVIVTMVY), 94–114 (VFYCFMAAFLGFFFLFAVIIY), 151–171 (IYYVMSELWSSVVLSMLFWGL), 223–243 (SVMLNLTMLITCSGLIMIWLY), 295–315 (LLGLAIIVLSYNLVIHLFEVV), 337–357 (ITTLIGVVSVLAAVLLTGQCI), 367–387 (LVTPLVMLVSGLLFFGTIFAA), 391–411 (ISIFGGVLGMTPLALAAWTGG), 458–478 (SGGSLIYQGLLVIFSSVAASL), and 480–500 (VIALVLLIIMVVWIAVVAYIG).

This sequence belongs to the ADP/ATP translocase tlc family.

It is found in the cell membrane. This chain is ADP,ATP carrier protein 2 (tlcB), found in Chlamydia pneumoniae (Chlamydophila pneumoniae).